Consider the following 186-residue polypeptide: Catechol O-methyltransferase (186 aa).

S-adenosyl-L-methionine is bound by residues valine 7, glutamate 29, serine 37, glutamate 55, leucine 56, 82-85 (GASQ), serine 84, and aspartate 106. Residue aspartate 106 participates in Mg(2+) binding. Lysine 109 is a substrate binding site. Aspartate 134 and asparagine 135 together coordinate Mg(2+). Substrate-binding residues include asparagine 135 and glutamate 164. Phosphoserine is present on serine 182.

Belongs to the class I-like SAM-binding methyltransferase superfamily. Cation-dependent O-methyltransferase family. Mg(2+) serves as cofactor.

The protein localises to the cytoplasm. It is found in the cell membrane. It carries out the reaction a catechol + S-adenosyl-L-methionine = a guaiacol + S-adenosyl-L-homocysteine + H(+). The catalysed reaction is 2-hydroxyestrone + S-adenosyl-L-methionine = 2-hydroxy-3-methoxy-estrone + S-adenosyl-L-homocysteine + H(+). The enzyme catalyses 4-hydroxyestrone + S-adenosyl-L-methionine = 4-methoxyestrone + S-adenosyl-L-homocysteine + H(+). It catalyses the reaction 2-hydroxyestrone + S-adenosyl-L-methionine = 2-methoxyestrone + S-adenosyl-L-homocysteine + H(+). It carries out the reaction 4-hydroxy-17beta-estradiol + S-adenosyl-L-methionine = 4-methoxy-17beta-estradiol + S-adenosyl-L-homocysteine + H(+). The catalysed reaction is 2-hydroxy-17beta-estradiol + S-adenosyl-L-methionine = 2-hydroxy-3-methoxy-17beta-estradiol + S-adenosyl-L-homocysteine + H(+). The enzyme catalyses 2-hydroxy-17beta-estradiol + S-adenosyl-L-methionine = 2-methoxy-17beta-estradiol + S-adenosyl-L-homocysteine + H(+). In terms of biological role, catalyzes the O-methylation, and thereby the inactivation, of catecholamine neurotransmitters and catechol hormones. Also shortens the biological half-lives of certain neuroactive drugs, like L-DOPA, alpha-methyl DOPA and isoproterenol. The chain is Catechol O-methyltransferase (COMT) from Sus scrofa (Pig).